A 289-amino-acid chain; its full sequence is uncharacterized protein (289 aa).

The tract at residues 25 to 66 (GGSGDSQSAHTPSTSIHTQNNSTPNKNTSTPPVNVSNANNLE) is disordered. The segment covering 33-43 (AHTPSTSIHTQ) has biased composition (polar residues). Over residues 44–59 (NNSTPNKNTSTPPVNV) the composition is skewed to low complexity.

This is an uncharacterized protein from Haemophilus influenzae (strain ATCC 51907 / DSM 11121 / KW20 / Rd).